The chain runs to 374 residues: Mitochondrial import inner membrane translocase subunit tim50 (374 aa).

Residues 1–48 constitute a mitochondrion transit peptide; the sequence is MILNKVAKCYGKQIGFFGNKTTQFIKPNQTIFLIGGTKRLFTTQQQQS. The interval 42 to 97 is disordered; the sequence is TTQQQQSPKKEEPKSEQQKKVEDKTEEKEKEKDEEENENEKEKENEDGEGQKKKSK. 2 stretches are compositionally biased toward basic and acidic residues: residues 49 to 72 and 81 to 93; these read PKKE…KEKE and EKEK…EGQK. The chain crosses the membrane as a helical span at residues 103 to 125; the sequence is IVTSVTSTFFAGVLVASTFGYLT. In terms of domain architecture, FCP1 homology spans 191–332; it reads PGGKKYTLVI…IELLPVLESF (142 aa).

Belongs to the TIM50 family. In terms of assembly, component of the mitochondrial import inner membrane translocase complex.

The protein localises to the mitochondrion inner membrane. Its function is as follows. Component of the mitochondrial import inner membrane translocase that mediates the translocation of transit peptide-containing proteins across the mitochondrial inner membrane. The polypeptide is Mitochondrial import inner membrane translocase subunit tim50 (timm50) (Dictyostelium discoideum (Social amoeba)).